Here is a 424-residue protein sequence, read N- to C-terminus: Glutamyl-tRNA reductase (424 aa).

Substrate contacts are provided by residues 53–56 (TCNR), Ser111, 116–118 (EPQ), and Gln122. Cys54 functions as the Nucleophile in the catalytic mechanism. Position 191-196 (191-196 (GAGEMI)) interacts with NADP(+).

Belongs to the glutamyl-tRNA reductase family. Homodimer.

It catalyses the reaction (S)-4-amino-5-oxopentanoate + tRNA(Glu) + NADP(+) = L-glutamyl-tRNA(Glu) + NADPH + H(+). It participates in porphyrin-containing compound metabolism; protoporphyrin-IX biosynthesis; 5-aminolevulinate from L-glutamyl-tRNA(Glu): step 1/2. Catalyzes the NADPH-dependent reduction of glutamyl-tRNA(Glu) to glutamate 1-semialdehyde (GSA). The protein is Glutamyl-tRNA reductase of Bordetella avium (strain 197N).